A 585-amino-acid polypeptide reads, in one-letter code: Arginine--tRNA ligase (585 aa).

The short motif at 126-136 (PNIAKEMHVGH) is the 'HIGH' region element.

The protein belongs to the class-I aminoacyl-tRNA synthetase family. In terms of assembly, monomer.

The protein localises to the cytoplasm. It carries out the reaction tRNA(Arg) + L-arginine + ATP = L-arginyl-tRNA(Arg) + AMP + diphosphate. The sequence is that of Arginine--tRNA ligase from Rippkaea orientalis (strain PCC 8801 / RF-1) (Cyanothece sp. (strain PCC 8801)).